A 134-amino-acid polypeptide reads, in one-letter code: Snaclec alboaggregin-A subunit alpha' (134 aa).

The C-type lectin domain occupies 1–134 (DFHCLPGWSA…NPFVCKFPPQ (134 aa)). 3 disulfides stabilise this stretch: Cys-4–Cys-15, Cys-32–Cys-129, and Cys-104–Cys-121.

It belongs to the snaclec family. Heterotetramer of the subunits alpha, alpha', beta and beta'; disulfide-linked. Expressed by the venom gland.

The protein resides in the secreted. Functionally, potent platelet activator that aggregates platelets via both GPIbalpha (GP1BA) and GPVI (GP6). Induces a tyrosine phosphorylation profile in platelets that resembles this produced by collagen, involving the time dependent tyrosine phosphorylation of Fc receptor gamma chain (FCGR1A), phospholipase Cgamma2 (PLCG2), and LAT. The polypeptide is Snaclec alboaggregin-A subunit alpha' (Trimeresurus albolabris (White-lipped pit viper)).